The sequence spans 262 residues: Flap endonuclease Xni (262 aa).

Mg(2+) is bound at residue Asp-105. Positions 162-257 (ERSQFLDLMA…FRVIDSPPEK (96 aa)) constitute a 5'-3' exonuclease domain. K(+) contacts are provided by Leu-172, Ala-173, Pro-181, Ile-183, and Ile-186. The tract at residues 185–190 (GIGPKS) is interaction with DNA.

This sequence belongs to the Xni family. The cofactor is Mg(2+). K(+) is required as a cofactor.

In terms of biological role, has flap endonuclease activity. During DNA replication, flap endonucleases cleave the 5'-overhanging flap structure that is generated by displacement synthesis when DNA polymerase encounters the 5'-end of a downstream Okazaki fragment. This Shewanella baltica (strain OS223) protein is Flap endonuclease Xni.